A 302-amino-acid chain; its full sequence is DDRGK domain-containing protein 1 (302 aa).

Residues 1–5 are Lumenal-facing; the sequence is MDGGG. Residues 6–26 traverse the membrane as a helical segment; that stretch reads GMLGAVVCLLLVFAIFPLLLW. At 27–302 the chain is on the cytoplasmic side; it reads RRRSDAAHRL…DENAAAGTEL (276 aa). Disordered stretches follow at residues 36–151 and 279–302; these read LPPQ…EEAR and DLEPKPQYNEESNLDENAAAGTEL. Residues 79-91 are compositionally biased toward acidic residues; it reads VDDADSDLEEEIQ. Basic and acidic residues predominate over residues 103–151; that stretch reads KRQDREAQRQAEEAARDSRRTKQDRYAEMRRKKDEEREAQERLMEEEAR.

Belongs to the DDRGK1 family.

The protein localises to the endoplasmic reticulum membrane. Functionally, substrate adapter for ufmylation, the covalent attachment of the ubiquitin-like modifier UFM1 to substrate proteins. The polypeptide is DDRGK domain-containing protein 1 (Oryza sativa subsp. japonica (Rice)).